A 264-amino-acid chain; its full sequence is Indole-3-glycerol phosphate synthase (264 aa).

It belongs to the TrpC family.

It catalyses the reaction 1-(2-carboxyphenylamino)-1-deoxy-D-ribulose 5-phosphate + H(+) = (1S,2R)-1-C-(indol-3-yl)glycerol 3-phosphate + CO2 + H2O. Its pathway is amino-acid biosynthesis; L-tryptophan biosynthesis; L-tryptophan from chorismate: step 4/5. The sequence is that of Indole-3-glycerol phosphate synthase from Rhizorhabdus wittichii (strain DSM 6014 / CCUG 31198 / JCM 15750 / NBRC 105917 / EY 4224 / RW1) (Sphingomonas wittichii).